The sequence spans 427 residues: Trigger factor (427 aa).

Positions 163–248 constitute a PPIase FKBP-type domain; the sequence is GDTVVIDFVG…VHEVKAKEVP (86 aa).

This sequence belongs to the FKBP-type PPIase family. Tig subfamily.

Its subcellular location is the cytoplasm. The enzyme catalyses [protein]-peptidylproline (omega=180) = [protein]-peptidylproline (omega=0). In terms of biological role, involved in protein export. Acts as a chaperone by maintaining the newly synthesized protein in an open conformation. Functions as a peptidyl-prolyl cis-trans isomerase. The polypeptide is Trigger factor (Streptococcus equi subsp. zooepidemicus (strain H70)).